The primary structure comprises 268 residues: 1,4-dihydroxy-2-naphthoyl-CoA synthase (268 aa).

Substrate-binding positions include 30-31 (VL), 70-74 (VGGDQ), 114-118 (YAVGG), S140, and S146. 139–141 (QSG) contributes to the hydrogencarbonate binding site.

Belongs to the enoyl-CoA hydratase/isomerase family. MenB subfamily. It depends on hydrogencarbonate as a cofactor.

It localises to the plastid. Its subcellular location is the chloroplast. The enzyme catalyses 2-succinylbenzoyl-CoA + H(+) = 1,4-dihydroxy-2-naphthoyl-CoA + H2O. It participates in quinol/quinone metabolism; 1,4-dihydroxy-2-naphthoate biosynthesis; 1,4-dihydroxy-2-naphthoate from chorismate: step 6/7. The protein operates within quinol/quinone metabolism; menaquinone biosynthesis. In terms of biological role, converts o-succinylbenzoyl-CoA (OSB-CoA) to 1,4-dihydroxy-2-naphthoyl-CoA (DHNA-CoA). The sequence is that of 1,4-dihydroxy-2-naphthoyl-CoA synthase (menB) from Cyanidium caldarium (Red alga).